An 835-amino-acid chain; its full sequence is Phenylalanine--tRNA ligase beta subunit (835 aa).

In terms of domain architecture, tRNA-binding spans 44–158 (GPVDGPLTVG…LPGADGADVL (115 aa)). The region spanning 414-493 (WSLPPIRIAV…RLEGLEVIRS (80 aa)) is the B5 domain. Mg(2+) contacts are provided by Asp471, Asp477, Glu480, and Glu481. The 94-residue stretch at 741–834 (SPFPAVLQDV…AAERVGATLR (94 aa)) folds into the FDX-ACB domain.

This sequence belongs to the phenylalanyl-tRNA synthetase beta subunit family. Type 1 subfamily. Tetramer of two alpha and two beta subunits. Mg(2+) serves as cofactor.

It is found in the cytoplasm. It catalyses the reaction tRNA(Phe) + L-phenylalanine + ATP = L-phenylalanyl-tRNA(Phe) + AMP + diphosphate + H(+). The protein is Phenylalanine--tRNA ligase beta subunit of Mycobacterium leprae (strain TN).